The sequence spans 280 residues: Bis(5'-nucleosyl)-tetraphosphatase, symmetrical (280 aa).

Belongs to the Ap4A hydrolase family.

The catalysed reaction is P(1),P(4)-bis(5'-adenosyl) tetraphosphate + H2O = 2 ADP + 2 H(+). Hydrolyzes diadenosine 5',5'''-P1,P4-tetraphosphate to yield ADP. The protein is Bis(5'-nucleosyl)-tetraphosphatase, symmetrical of Escherichia coli O17:K52:H18 (strain UMN026 / ExPEC).